A 1382-amino-acid chain; its full sequence is Hepatocyte growth factor receptor (1382 aa).

Positions 1–24 (MKASAVLAPGILALLFTLVQGNDG) are cleaved as a signal peptide. Residues 25–933 (ECQEALAKSE…VIVQPDQNFT (909 aa)) lie on the Extracellular side of the membrane. The Sema domain maps to 27 to 516 (QEALAKSEMN…TGKKITKIPL (490 aa)). N-linked (GlcNAc...) asparagine glycans are attached at residues Asn45, Asn100, and Asn106. 4 disulfides stabilise this stretch: Cys95-Cys101, Cys98-Cys160, Cys133-Cys141, and Cys173-Cys176. 2 N-linked (GlcNAc...) asparagine glycosylation sites follow: Asn203 and Asn359. 2 disulfides stabilise this stretch: Cys299–Cys364 and Cys386–Cys398. N-linked (GlcNAc...) asparagine glycosylation is found at Asn400 and Asn406. 4 disulfide bridges follow: Cys521–Cys539, Cys527–Cys562, Cys530–Cys546, and Cys542–Cys552. IPT/TIG domains lie at 564–656 (PAIH…FSYV), 658–740 (PVIT…FSYR), and 743–837 (PIVH…LIYV). Thr583 carries O-linked (Man) threonine glycosylation. Asn608 and Asn636 each carry an N-linked (GlcNAc...) asparagine glycan. 2 O-linked (Man) threonine glycosylation sites follow: Thr677 and Thr762. N-linked (GlcNAc...) asparagine glycosylation is found at Asn786, Asn880, and Asn931. Residues 934–956 (GLIVGVVSISIILLLLLGLFLWM) traverse the membrane as a helical segment. Residues 957–1382 (KKRKQIKDLG…QDNVNGEVDT (426 aa)) lie on the Cytoplasmic side of the membrane. Phosphoserine is present on Ser967. Phosphothreonine is present on Thr978. Ser991, Ser998, and Ser1001 each carry phosphoserine. Position 1004 is a phosphotyrosine (Tyr1004). The Protein kinase domain occupies 1079–1346 (VHFNEVIGRG…RISAIFSTFI (268 aa)). ATP is bound by residues 1085 to 1093 (IGRGHFGCV) and Lys1111. Asp1205 functions as the Proton acceptor in the catalytic mechanism. The tract at residues 1213–1382 (LDEKFTVKVA…QDNVNGEVDT (170 aa)) is interaction with RANBP9. Phosphotyrosine is present on Tyr1231. Tyr1235 and Tyr1236 each carry phosphotyrosine; by autocatalysis. At Thr1290 the chain carries Phosphothreonine. Positions 1321–1360 (WHPKAEMRPSFSELVSRISAIFSTFIGEHYVHVNATYVNV) are interaction with MUC20. Residues Tyr1350 and Tyr1357 each carry the phosphotyrosine; by autocatalysis modification. Tyr1366 bears the Phosphotyrosine mark.

This sequence belongs to the protein kinase superfamily. Tyr protein kinase family. Heterodimer made of an alpha chain (50 kDa) and a beta chain (145 kDa) which are disulfide linked. Binds PLXNB1. Interacts when phosphorylated with downstream effectors including STAT3, PIK3R1, SRC, PCLG1, GRB2 and GAB1. Interacts with SPSB1, SPSB2 and SPSB4. Interacts with INPP5D/SHIP1. When phosphorylated at Tyr-1357, interacts with INPPL1/SHIP2. Interacts with RANBP9 and RANBP10, as well as SPSB1, SPSB2, SPSB3 and SPSB4. SPSB1 binding occurs in the presence and in the absence of HGF, however HGF treatment has a positive effect on this interaction. Interacts with MUC20; prevents interaction with GRB2 and suppresses hepatocyte growth factor-induced cell proliferation. Interacts with GRB10. Interacts with PTPN1 and PTPN2. Interacts with HSP90AA1 and HSP90AB1; the interaction suppresses MET kinase activity. Interacts with tensin TNS3. Interacts (when phosphorylated) with tensin TNS4 (via SH2 domain); the interaction increases MET protein stability by inhibiting MET endocytosis and subsequent lysosomal degradation. Post-translationally, autophosphorylated in response to ligand binding on Tyr-1235 and Tyr-1236 in the kinase domain leading to further phosphorylation of Tyr-1350 and Tyr-1357 in the C-terminal multifunctional docking site. Dephosphorylated by PTPRJ at Tyr-1350 and Tyr-1366. Dephosphorylated by PTPN1 and PTPN2. Ubiquitinated. Ubiquitination by CBL regulates the receptor stability and activity through proteasomal degradation. In terms of processing, O-mannosylation of IPT/TIG domains by TMEM260 is required for protein maturation. O-mannosylated residues are composed of single mannose glycans that are not elongated or modified.

It localises to the membrane. The enzyme catalyses L-tyrosyl-[protein] + ATP = O-phospho-L-tyrosyl-[protein] + ADP + H(+). With respect to regulation, in its inactive state, the C-terminal tail interacts with the catalytic domain and inhibits the kinase activity. Upon ligand binding, the C-terminal tail is displaced and becomes phosphorylated, thus increasing the kinase activity. Its function is as follows. Receptor tyrosine kinase that transduces signals from the extracellular matrix into the cytoplasm by binding to hepatocyte growth factor/HGF ligand. Regulates many physiological processes including proliferation, scattering, morphogenesis and survival. Ligand binding at the cell surface induces autophosphorylation of MET on its intracellular domain that provides docking sites for downstream signaling molecules. Following activation by ligand, interacts with the PI3-kinase subunit PIK3R1, PLCG1, SRC, GRB2, STAT3 or the adapter GAB1. Recruitment of these downstream effectors by MET leads to the activation of several signaling cascades including the RAS-ERK, PI3 kinase-AKT, or PLCgamma-PKC. The RAS-ERK activation is associated with the morphogenetic effects while PI3K/AKT coordinates prosurvival effects. During embryonic development, MET signaling plays a role in gastrulation, development and migration of muscles and neuronal precursors, angiogenesis and kidney formation. In adults, participates in wound healing as well as organ regeneration and tissue remodeling. Also promotes differentiation and proliferation of hematopoietic cells. This is Hepatocyte growth factor receptor (MET) from Eulemur macaco macaco (Black lemur).